A 638-amino-acid chain; its full sequence is Chaperone protein DnaK (638 aa).

Position 198 is a phosphothreonine; by autocatalysis (Thr-198). The disordered stretch occupies residues 598 to 638; the sequence is YEASQKEAAEADAKADAAKDSDVVDADFEEIDEDDDKKKSA. Over residues 601–619 the composition is skewed to basic and acidic residues; it reads SQKEAAEADAKADAAKDSD. A compositionally biased stretch (acidic residues) spans 620–632; that stretch reads VVDADFEEIDEDD.

Belongs to the heat shock protein 70 family.

Functionally, acts as a chaperone. The sequence is that of Chaperone protein DnaK from Mesorhizobium japonicum (strain LMG 29417 / CECT 9101 / MAFF 303099) (Mesorhizobium loti (strain MAFF 303099)).